The chain runs to 293 residues: Bifunctional protein FolD (293 aa).

Residues 164 to 166 (GRS), Ser-193, and Thr-234 contribute to the NADP(+) site.

It belongs to the tetrahydrofolate dehydrogenase/cyclohydrolase family. In terms of assembly, homodimer.

It catalyses the reaction (6R)-5,10-methylene-5,6,7,8-tetrahydrofolate + NADP(+) = (6R)-5,10-methenyltetrahydrofolate + NADPH. The enzyme catalyses (6R)-5,10-methenyltetrahydrofolate + H2O = (6R)-10-formyltetrahydrofolate + H(+). It participates in one-carbon metabolism; tetrahydrofolate interconversion. In terms of biological role, catalyzes the oxidation of 5,10-methylenetetrahydrofolate to 5,10-methenyltetrahydrofolate and then the hydrolysis of 5,10-methenyltetrahydrofolate to 10-formyltetrahydrofolate. In Bacteroides fragilis (strain ATCC 25285 / DSM 2151 / CCUG 4856 / JCM 11019 / LMG 10263 / NCTC 9343 / Onslow / VPI 2553 / EN-2), this protein is Bifunctional protein FolD.